A 68-amino-acid polypeptide reads, in one-letter code: Neuronal regeneration-related protein (68 aa).

The tract at residues 42–68 (EETGAASLTPPGSREFTSPATSYLHPF) is disordered.

Interacts with FLNA. Interacts with the latency-associated peptides (LAP) of TGFB1 and TGFB2; the interaction results in a decrease in TGFB autoinduction. Phosphorylated on Ser-59. Phosphorylation decreases stability and activity. Expressed in brain and fetal lung.

It is found in the cytoplasm. Its function is as follows. May have roles in cellular differentiation. Ectopic expression induces differentiation of fibroblast into myofibroblast and myofibroblast ameboid migration. Increases retinoic-acid regulation of lipid-droplet biogenesis. May also have neural functions. Promotes axonal regeneration and augments motility of gliomas. Down-regulates the expression of TGFB1 and TGFB2 but not of TGFB3. May play a role in the regulation of alveolar generation. This is Neuronal regeneration-related protein (Nrep) from Mus musculus (Mouse).